Consider the following 362-residue polypeptide: Aminomethyltransferase (362 aa).

Belongs to the GcvT family. The glycine cleavage system is composed of four proteins: P, T, L and H.

It carries out the reaction N(6)-[(R)-S(8)-aminomethyldihydrolipoyl]-L-lysyl-[protein] + (6S)-5,6,7,8-tetrahydrofolate = N(6)-[(R)-dihydrolipoyl]-L-lysyl-[protein] + (6R)-5,10-methylene-5,6,7,8-tetrahydrofolate + NH4(+). In terms of biological role, the glycine cleavage system catalyzes the degradation of glycine. This is Aminomethyltransferase from Listeria welshimeri serovar 6b (strain ATCC 35897 / DSM 20650 / CCUG 15529 / CIP 8149 / NCTC 11857 / SLCC 5334 / V8).